The primary structure comprises 243 residues: Carboxy-S-adenosyl-L-methionine synthase (243 aa).

S-adenosyl-L-methionine contacts are provided by residues Tyr40, 65–67 (GCS), 90–91 (DN), 118–119 (DI), Asn133, and Arg200.

Belongs to the class I-like SAM-binding methyltransferase superfamily. Cx-SAM synthase family. Homodimer.

The enzyme catalyses prephenate + S-adenosyl-L-methionine = carboxy-S-adenosyl-L-methionine + 3-phenylpyruvate + H2O. In terms of biological role, catalyzes the conversion of S-adenosyl-L-methionine (SAM) to carboxy-S-adenosyl-L-methionine (Cx-SAM). The chain is Carboxy-S-adenosyl-L-methionine synthase from Shewanella sp. (strain ANA-3).